The sequence spans 307 residues: Probable porphobilinogen deaminase (307 aa).

The residue at position 240 (Cys240) is an S-(dipyrrolylmethanemethyl)cysteine.

The protein belongs to the HMBS family. It depends on dipyrromethane as a cofactor.

It carries out the reaction 4 porphobilinogen + H2O = hydroxymethylbilane + 4 NH4(+). It participates in porphyrin-containing compound metabolism; protoporphyrin-IX biosynthesis; coproporphyrinogen-III from 5-aminolevulinate: step 2/4. Functionally, tetrapolymerization of the monopyrrole PBG into the hydroxymethylbilane pre-uroporphyrinogen in several discrete steps. This is Probable porphobilinogen deaminase (hemC) from Aeropyrum pernix (strain ATCC 700893 / DSM 11879 / JCM 9820 / NBRC 100138 / K1).